A 908-amino-acid polypeptide reads, in one-letter code: Probable RNA-directed DNA polymerase from transposon X-element (908 aa).

Positions 481-752 (AIVRLQYFPY…NAAKYLGVLL (272 aa)) constitute a Reverse transcriptase domain. The segment at 883–908 (RPPRRLNRRQPRDLITRSPLTRVRRS) is disordered.

The cofactor is Mg(2+). Requires Mn(2+) as cofactor.

The catalysed reaction is DNA(n) + a 2'-deoxyribonucleoside 5'-triphosphate = DNA(n+1) + diphosphate. The sequence is that of Probable RNA-directed DNA polymerase from transposon X-element (X-element\ORF2) from Drosophila melanogaster (Fruit fly).